Here is a 359-residue protein sequence, read N- to C-terminus: DNA polymerase IV (359 aa).

The region spanning 4-185 is the UmuC domain; it reads IIHIDMDCYF…LSLRKIPGVG (182 aa). Residues Asp8 and Asp103 each coordinate Mg(2+). Glu104 is an active-site residue.

It belongs to the DNA polymerase type-Y family. In terms of assembly, monomer. Mg(2+) serves as cofactor.

The protein resides in the cytoplasm. The catalysed reaction is DNA(n) + a 2'-deoxyribonucleoside 5'-triphosphate = DNA(n+1) + diphosphate. In terms of biological role, poorly processive, error-prone DNA polymerase involved in untargeted mutagenesis. Copies undamaged DNA at stalled replication forks, which arise in vivo from mismatched or misaligned primer ends. These misaligned primers can be extended by PolIV. Exhibits no 3'-5' exonuclease (proofreading) activity. May be involved in translesional synthesis, in conjunction with the beta clamp from PolIII. This chain is DNA polymerase IV, found in Shewanella sp. (strain ANA-3).